A 258-amino-acid chain; its full sequence is UPF0246 protein Pnuc_0753 (258 aa).

This sequence belongs to the UPF0246 family.

This chain is UPF0246 protein Pnuc_0753, found in Polynucleobacter asymbioticus (strain DSM 18221 / CIP 109841 / QLW-P1DMWA-1) (Polynucleobacter necessarius subsp. asymbioticus).